The primary structure comprises 1366 residues: ABC multidrug transporter MDR2 (1366 aa).

A helical membrane pass occupies residues 52–72 (IALIVIGTIAGIGAGIPFPLL). Residues 56 to 354 (VIGTIAGIGA…MAPFMHIFAS (299 aa)) form the ABC transmembrane type-1 1 domain. Asn-84 carries N-linked (GlcNAc...) asparagine glycosylation. The next 5 membrane-spanning stretches (helical) occupy residues 106-126 (VLQV…HTGC), 180-200 (KVGL…VAFL), 202-222 (VATI…MAFG), 288-308 (IQFG…FWQG), and 323-343 (VSVG…FVLS). The ABC transporter 1 domain maps to 390–669 (IELQDVTFNY…DGVYAGMVRL (280 aa)). 425–432 (GTSGSGKS) is an ATP binding site. Asn-620 carries N-linked (GlcNAc...) asparagine glycosylation. The interval 727-746 (PEEADSLPTEPEAKKEKPKQ) is disordered. 4 helical membrane-spanning segments follow: residues 768 to 788 (LGLI…VIFG), 807 to 827 (GMLF…AVIV), 868 to 888 (LLVA…GTTI), and 898 to 918 (LFAG…VLLA). In terms of domain architecture, ABC transmembrane type-1 2 spans 768 to 1055 (LGLITSIMIG…MFALVPDISK (288 aa)). Asn-976 carries an N-linked (GlcNAc...) asparagine glycan. 2 helical membrane-spanning segments follow: residues 995–1015 (FWLS…YWWG) and 1019–1039 (ILAG…LLFS). An ABC transporter 2 domain is found at 1122 to 1361 (VQFRNVHFRY…CESYRANVIH (240 aa)). Residue 1157–1164 (GPSGSGKS) participates in ATP binding.

It belongs to the ABC transporter superfamily. ABCB family. Multidrug resistance exporter (TC 3.A.1.201) subfamily.

Its subcellular location is the cell membrane. In terms of biological role, pleiotropic ABC efflux transporter that may be involved in the modulation susceptibility to a wide range of unrelated cytotoxic compounds. Does not act as an efflux pump for azoles, including fluconazole, itraconazole, ketoconazole, miconazole and voriconazole, nor does it modulate susceptibility to cycloheximide. The chain is ABC multidrug transporter MDR2 from Trichophyton rubrum (strain ATCC MYA-4607 / CBS 118892) (Athlete's foot fungus).